The sequence spans 313 residues: Probable WRKY transcription factor 41 (313 aa).

Residues glycine 135–glycine 203 constitute a DNA-binding region (WRKY).

It belongs to the WRKY group III family.

The protein localises to the nucleus. Transcription factor. Interacts specifically with the W box (5'-(T)TGAC[CT]-3'), a frequently occurring elicitor-responsive cis-acting element. The polypeptide is Probable WRKY transcription factor 41 (WRKY41) (Arabidopsis thaliana (Mouse-ear cress)).